The chain runs to 95 residues: MRKYEVMYIIRPNIDEESKKAVIERFNNVLTSNGAEITGTKDWGKRRLAYEINDFRDGFYQIVNVQSDAAAVQEFDRLAKISDDIIRHIVVKEEE.

Belongs to the bacterial ribosomal protein bS6 family. Part of the 30S ribosomal subunit.

In terms of biological role, binds together with bS18 to 16S ribosomal RNA. The protein is Small ribosomal subunit protein bS6 (rpsF) of Bacillus subtilis (strain 168).